The primary structure comprises 274 residues: SPbeta prophage-derived uncharacterized protein YomD (274 aa).

The chain is SPbeta prophage-derived uncharacterized protein YomD (yomD) from Bacillus subtilis (strain 168).